Reading from the N-terminus, the 270-residue chain is Nuclease P1 (270 aa).

The a divalent metal cation site is built by W1, H6, H15, D45, and H60. 1–6 serves as a coordination point for substrate; the sequence is WGALGH. Substrate-binding positions include 45 to 51, 60 to 63, and 73 to 78; these read DEYRLTS, HFID, and NVDYER. 2 cysteine pairs are disulfide-bonded: C72–C217 and C80–C85. N-linked (GlcNAc...) asparagine glycosylation is present at N92. Residues H116, D120, and H126 each coordinate a divalent metal cation. The substrate binding stretch occupies residues 116–164; that stretch reads HFIGDMTQPLHDEAYAVGGNKINVTFDGYHDNLHSDWDTYMPQKLIGGH. N-linked (GlcNAc...) asparagine glycosylation is present at N138. Positions 149 and 153 each coordinate a divalent metal cation. N-linked (GlcNAc...) asparagine glycans are attached at residues N184 and N197.

The protein belongs to the nuclease type I family. Requires Zn(2+) as cofactor.

The protein localises to the secreted. It carries out the reaction Endonucleolytic cleavage to 5'-phosphomononucleotide and 5'-phosphooligonucleotide end-products.. Functionally, hydrolyzes only single-stranded DNA and RNA without apparent specificity for bases. The protein is Nuclease P1 of Penicillium citrinum.